The primary structure comprises 111 residues: uncharacterized protein (111 aa).

3 helical membrane passes run 4 to 23, 39 to 61, and 65 to 84; these read LHQV…LGHV, IYLG…VLSA, and SGIQ…EAVL.

It is found in the cell membrane. This is an uncharacterized protein from Bacillus subtilis (strain 168).